A 189-amino-acid chain; its full sequence is Xanthine phosphoribosyltransferase (189 aa).

Xanthine-binding residues include leucine 20 and asparagine 27. Residue 128 to 132 (ANGKA) participates in 5-phospho-alpha-D-ribose 1-diphosphate binding. Xanthine is bound at residue lysine 156.

This sequence belongs to the purine/pyrimidine phosphoribosyltransferase family. Xpt subfamily. As to quaternary structure, homodimer.

It is found in the cytoplasm. The catalysed reaction is XMP + diphosphate = xanthine + 5-phospho-alpha-D-ribose 1-diphosphate. The protein operates within purine metabolism; XMP biosynthesis via salvage pathway; XMP from xanthine: step 1/1. In terms of biological role, converts the preformed base xanthine, a product of nucleic acid breakdown, to xanthosine 5'-monophosphate (XMP), so it can be reused for RNA or DNA synthesis. This Pseudomonas syringae pv. syringae (strain B728a) protein is Xanthine phosphoribosyltransferase.